Here is a 168-residue protein sequence, read N- to C-terminus: Dihydrofolate reductase (168 aa).

The DHFR domain maps to 1 to 164; sequence MIIGIWAEDE…YTFTIKKYEK (164 aa). 5–7 contacts substrate; that stretch reads IWA. Residues 6-7 and 14-19 contribute to the NADP(+) site; these read WA and IGEADK. A substrate-binding site is contributed by E27. NADP(+) is bound at residue 43–46; it reads GRKT. R58 contacts substrate. NADP(+) contacts are provided by residues 63-66 and 99-104; these read LTRD and TGGAEI. Substrate is bound at residue T118.

Belongs to the dihydrofolate reductase family.

It carries out the reaction (6S)-5,6,7,8-tetrahydrofolate + NADP(+) = 7,8-dihydrofolate + NADPH + H(+). The protein operates within cofactor biosynthesis; tetrahydrofolate biosynthesis; 5,6,7,8-tetrahydrofolate from 7,8-dihydrofolate: step 1/1. Functionally, key enzyme in folate metabolism. Catalyzes an essential reaction for de novo glycine and purine synthesis, and for DNA precursor synthesis. The chain is Dihydrofolate reductase (folA) from Lactococcus lactis subsp. lactis (strain IL1403) (Streptococcus lactis).